The primary structure comprises 220 residues: DNA-directed RNA polymerase subunit alpha (220 aa).

It belongs to the RNA polymerase alpha chain family. In plastids the minimal PEP RNA polymerase catalytic core is composed of four subunits: alpha, beta, beta', and beta''. When a (nuclear-encoded) sigma factor is associated with the core the holoenzyme is formed, which can initiate transcription.

Its subcellular location is the plastid. It carries out the reaction RNA(n) + a ribonucleoside 5'-triphosphate = RNA(n+1) + diphosphate. Functionally, DNA-dependent RNA polymerase catalyzes the transcription of DNA into RNA using the four ribonucleoside triphosphates as substrates. This Euglena longa (Euglenophycean alga) protein is DNA-directed RNA polymerase subunit alpha (rpoA).